The sequence spans 725 residues: Glyoxysomal fatty acid beta-oxidation multifunctional protein MFP-a (725 aa).

The active-site Nucleophile is Glu-119. The active-site Proton acceptor is Glu-139. The short motif at 723 to 725 (SRL) is the Microbody targeting signal element.

In the N-terminal section; belongs to the enoyl-CoA hydratase/isomerase family. The protein in the central section; belongs to the 3-hydroxyacyl-CoA dehydrogenase family.

It localises to the glyoxysome. It catalyses the reaction a (3S)-3-hydroxyacyl-CoA = a (2E)-enoyl-CoA + H2O. The catalysed reaction is a 4-saturated-(3S)-3-hydroxyacyl-CoA = a (3E)-enoyl-CoA + H2O. The enzyme catalyses a (3Z)-enoyl-CoA = a 4-saturated (2E)-enoyl-CoA. It carries out the reaction a (3E)-enoyl-CoA = a 4-saturated (2E)-enoyl-CoA. It catalyses the reaction (3S)-3-hydroxybutanoyl-CoA = (3R)-3-hydroxybutanoyl-CoA. The catalysed reaction is a (3S)-3-hydroxyacyl-CoA + NAD(+) = a 3-oxoacyl-CoA + NADH + H(+). Its pathway is lipid metabolism; fatty acid beta-oxidation. This chain is Glyoxysomal fatty acid beta-oxidation multifunctional protein MFP-a, found in Brassica napus (Rape).